The sequence spans 171 residues: Large ribosomal subunit protein uL10 (171 aa).

The protein belongs to the universal ribosomal protein uL10 family. As to quaternary structure, part of the ribosomal stalk of the 50S ribosomal subunit. The N-terminus interacts with L11 and the large rRNA to form the base of the stalk. The C-terminus forms an elongated spine to which L12 dimers bind in a sequential fashion forming a multimeric L10(L12)X complex.

Functionally, forms part of the ribosomal stalk, playing a central role in the interaction of the ribosome with GTP-bound translation factors. This Corynebacterium glutamicum (strain ATCC 13032 / DSM 20300 / JCM 1318 / BCRC 11384 / CCUG 27702 / LMG 3730 / NBRC 12168 / NCIMB 10025 / NRRL B-2784 / 534) protein is Large ribosomal subunit protein uL10.